We begin with the raw amino-acid sequence, 245 residues long: Ribonuclease PH (245 aa).

Phosphate-binding positions include R86 and 124 to 126 (GTR).

The protein belongs to the RNase PH family. Homohexameric ring arranged as a trimer of dimers.

The enzyme catalyses tRNA(n+1) + phosphate = tRNA(n) + a ribonucleoside 5'-diphosphate. Functionally, phosphorolytic 3'-5' exoribonuclease that plays an important role in tRNA 3'-end maturation. Removes nucleotide residues following the 3'-CCA terminus of tRNAs; can also add nucleotides to the ends of RNA molecules by using nucleoside diphosphates as substrates, but this may not be physiologically important. Probably plays a role in initiation of 16S rRNA degradation (leading to ribosome degradation) during starvation. The polypeptide is Ribonuclease PH (Bacillus cereus (strain B4264)).